Reading from the N-terminus, the 1100-residue chain is MTPTSLARARPTSSHRWVPAAAGWIVGVIATLSLLASVSPLVRSLIRVPREWVDDYIFNFPDTSFAWAFVLALLAAALAARKRIAWWILVGYMIAAAGWNIAGLAEGRERWFAEVGEVIGLAFHLAAIAFLLLARKEFWARVRRGALLKAAATLVASMAVGTLIGWGLLELFPGSLARSDRFLYALNRVSAFAGADAASFSGHPHVFVNALLGLFGAVALMVTAIVLFQSQRADNALTGEDESAIRGLLELYGKNDSLGYFATRRDKAVVFAPSGRAAITYRVEVGVCLASGDPVGDPRSWPQAIDAWLKLCQAYGWAPGVMGASAAGAQAFREAGLNALQLGDEAILHPEDFRLSGPDMRAVRQAVTRARRAGATVRIRRHRELPADEMAAVIERADAWRDTDDERGFSMALGRLGDPADGDCLLVEAVQADQVVAMLSLVPWGGNGVSLDLMRRSPQSPNGTIELMVSELCMQSEDIGITRISLNFAMFRSAFEQGAQLGAGPVARLWRWLLVFFSRWWQLETLYRSNMKYQPEWVPRYACYDDARLVPRVGVASVIAEGFLVLPFSRRHEQPHTGHHIAAPGTLVATGLLHSDGTAPDGMGLQADLADDDQPRLPEQVRVRMAKLKALQAQGVDAYPVANPPSHTVAQALAAEDGADVAVAGRVLRSRDYGGVLFAQLRDWSGETQLVLDNSLLADGSTADFTRTIDLGDLIEVTGTMGRSRSGKWSLLVSGWRLIGKCLRPLPDKWKGLTDQEARVRARYVDLAVNTDARELIRARSAVLHAIRETLVAKDFLEVETPILQQIHGGANARPFLTHINAYDLDLYLRIAPELYLKRLCVGGVERVFELGRAFRNEGVDFSHNPEFTLLEAYQAHADYHVWIDGCRELIQNAAQAANGAQVFMRPRADGVLEPVDISGPWTVKTVHGAVSEALGEQIGPDTDLATLRLLCDRAGIPYLTHWDAGAVVLELYEHLVEDQTREPTFYKDFPTSVSPLTRPHRSIPGVAERWDLVAWGVELGTAYSELTDPVEQRRRLQEQSLLAAGGDPEAMELDEDFLQAMEYAMPPTGGLGMGVDRVVMLITGRSIRETLPFPLAKPR.

A phosphatidylglycerol lysyltransferase region spans residues 1 to 601 (MTPTSLARAR…LLHSDGTAPD (601 aa)). A run of 7 helical transmembrane segments spans residues 18-38 (VPAAAGWIVGVIATLSLLASV), 60-80 (FPDTSFAWAFVLALLAAALAA), 84-104 (IAWWILVGYMIAAAGWNIAGL), 112-132 (FAEVGEVIGLAFHLAAIAFLL), 154-174 (LVASMAVGTLIGWGLLELFPG), 206-226 (VFVNALLGLFGAVALMVTAIV), and 314-332 (AYGWAPGVMGASAAGAQAF). A lysine--tRNA ligase region spans residues 602 to 1100 (GMGLQADLAD…TLPFPLAKPR (499 aa)). Residues 661–739 (VAVAGRVLRS…SLLVSGWRLI (79 aa)) constitute a DNA-binding region (OB). Positions 1012 and 1019 each coordinate Mg(2+).

In the N-terminal section; belongs to the LPG synthetase family. It in the C-terminal section; belongs to the class-II aminoacyl-tRNA synthetase family. The cofactor is Mg(2+).

It localises to the cell membrane. It catalyses the reaction tRNA(Lys) + L-lysine + ATP = L-lysyl-tRNA(Lys) + AMP + diphosphate. It carries out the reaction L-lysyl-tRNA(Lys) + a 1,2-diacyl-sn-glycero-3-phospho-(1'-sn-glycerol) = a 1,2-diacyl-sn-glycero-3-phospho-1'-(3'-O-L-lysyl)-sn-glycerol + tRNA(Lys). Catalyzes the production of L-lysyl-tRNA(Lys)transfer and the transfer of a lysyl group from L-lysyl-tRNA(Lys) to membrane-bound phosphatidylglycerol (PG), which produces lysylphosphatidylglycerol (LPG), one of the components of the bacterial membrane with a positive net charge. LPG synthesis contributes to the resistance to cationic antimicrobial peptides (CAMPs) and likely protects M.tuberculosis against the CAMPs produced by competiting microorganisms (bacteriocins). In fact, the modification of anionic phosphatidylglycerol with positively charged L-lysine results in repulsion of the peptides. The polypeptide is Lysylphosphatidylglycerol biosynthesis bifunctional protein LysX (lysX) (Mycolicibacterium vanbaalenii (strain DSM 7251 / JCM 13017 / BCRC 16820 / KCTC 9966 / NRRL B-24157 / PYR-1) (Mycobacterium vanbaalenii)).